A 394-amino-acid polypeptide reads, in one-letter code: Choline/ethanolamine kinase (394 aa).

Ala-2 carries the N-acetylalanine modification. Residues 22 to 42 (GLLDAKCPEPIPNRRRSSSLS) form a disordered region. ATP-binding positions include 75 to 81 (SGGLSNL), Arg-104, 146 to 152 (QYLPSRP), Gln-244, and Asp-264. 77–79 (GLS) is a binding site for substrate.

This sequence belongs to the choline/ethanolamine kinase family. In terms of assembly, homodimer, and heterodimer with CHKA.

It carries out the reaction choline + ATP = phosphocholine + ADP + H(+). The catalysed reaction is ethanolamine + ATP = phosphoethanolamine + ADP + H(+). Its pathway is phospholipid metabolism; phosphatidylethanolamine biosynthesis; phosphatidylethanolamine from ethanolamine: step 1/3. Its function is as follows. Has a key role in phospholipid metabolism, and catalyzes the first step of phosphatidylethanolamine and phosphatidylcholine biosynthesis. The protein is Choline/ethanolamine kinase (Chkb) of Rattus norvegicus (Rat).